Here is a 409-residue protein sequence, read N- to C-terminus: MNPALARLQARGFIRQCTDLSALSARMDAGPLTFYVGVDPTGSSLHVGHMLPMFALKHLCDAGHRGCVLIGGGTARIGDPSGKTSMRKMLDYATLDAYAGAIVAQLDHFLSFDHRHVFYVNNRDWLAHLNYIDFLREVGAHFSVNKMLTYEAYKKRLETGLSFLEFNYQLLQSYDFLTLSDRYAVELQIGGDDQWGNIVAGADLVRRVRGKTVHGLTFPLITRADGQKMGKTEQGALFLDPALVSPYDFFQYWRNTPDEDVRRFLLLFTFLSVRDVEAILTQGINCAKELLAYEVTRLMHGTAVAQVALQGARAAFGGCGDKCALPTFELTQCTLQVGIKVTDLFVQVGLCTTKSDARRLIAQGGAFVGLQRVADIGAVIDQSALDLDGTVIVRAGKKRVVRIVTDVLE.

An L-tyrosine-binding site is contributed by Tyr35. The short motif at 40 to 49 (PTGSSLHVGH) is the 'HIGH' region element. L-tyrosine is bound by residues Tyr168 and Gln172. The 'KMSKS' region motif lies at 228 to 232 (KMGKT). Lys231 serves as a coordination point for ATP. In terms of domain architecture, S4 RNA-binding spans 339–404 (IKVTDLFVQV…AGKKRVVRIV (66 aa)).

It belongs to the class-I aminoacyl-tRNA synthetase family. TyrS type 1 subfamily. Homodimer.

The protein localises to the cytoplasm. The enzyme catalyses tRNA(Tyr) + L-tyrosine + ATP = L-tyrosyl-tRNA(Tyr) + AMP + diphosphate + H(+). Catalyzes the attachment of tyrosine to tRNA(Tyr) in a two-step reaction: tyrosine is first activated by ATP to form Tyr-AMP and then transferred to the acceptor end of tRNA(Tyr). The sequence is that of Tyrosine--tRNA ligase from Treponema pallidum (strain Nichols).